Reading from the N-terminus, the 283-residue chain is Pantothenate synthetase (283 aa).

30–37 contacts ATP; that stretch reads MGFLHEGH. The Proton donor role is filled by H37. Position 61 (Q61) interacts with (R)-pantoate. Q61 contacts beta-alanine. 147–150 lines the ATP pocket; that stretch reads GKKD. A (R)-pantoate-binding site is contributed by Q153. ATP-binding positions include V176 and 184-187; that span reads MSSR.

The protein belongs to the pantothenate synthetase family. Homodimer.

It is found in the cytoplasm. It catalyses the reaction (R)-pantoate + beta-alanine + ATP = (R)-pantothenate + AMP + diphosphate + H(+). Its pathway is cofactor biosynthesis; (R)-pantothenate biosynthesis; (R)-pantothenate from (R)-pantoate and beta-alanine: step 1/1. In terms of biological role, catalyzes the condensation of pantoate with beta-alanine in an ATP-dependent reaction via a pantoyl-adenylate intermediate. The chain is Pantothenate synthetase from Trichlorobacter lovleyi (strain ATCC BAA-1151 / DSM 17278 / SZ) (Geobacter lovleyi).